The primary structure comprises 301 residues: Inactive C-alpha-formylglycine-generating enzyme 2 (301 aa).

The signal sequence occupies residues methionine 1–glycine 25. An intrachain disulfide couples cysteine 156 to cysteine 290. N-linked (GlcNAc...) asparagine glycosylation is present at asparagine 191. The Ca(2+) site is built by asparagine 194, leucine 195, aspartate 208, phenylalanine 210, aspartate 229, glycine 232, valine 234, and glutamate 236. Over residues arginine 274–aspartate 284 the composition is skewed to polar residues. Positions arginine 274–leucine 301 are disordered. Positions proline 298–leucine 301 match the Non-canonical ER retention motif motif.

Belongs to the sulfatase-modifying factor family. In terms of assembly, homodimer and heterodimer with SUMF1.

The protein localises to the endoplasmic reticulum lumen. In terms of biological role, lacks formylglycine generating activity and is unable to convert newly synthesized inactive sulfatases to their active form. Inhibits the activation of sulfatases by SUMF1. The sequence is that of Inactive C-alpha-formylglycine-generating enzyme 2 from Bos taurus (Bovine).